Reading from the N-terminus, the 762-residue chain is Glucan endo-1,3-beta-glucosidase BGN13.1 (762 aa).

Positions 1–16 (MLKLTALVALLLGAAS) are cleaved as a signal peptide. The propeptide occupies 17–33 (ATPTPSPPASDEGITKR).

The protein belongs to the glycosyl hydrolase 55 family. In terms of processing, does not seem to be glycosylated.

It is found in the secreted. The catalysed reaction is Hydrolysis of (1-&gt;3)-beta-D-glucosidic linkages in (1-&gt;3)-beta-D-glucans.. With respect to regulation, inhibited by glucose. Involved in mycoparasitism, hydrolyzes yeast and fungal cell walls. Classified as a small-oligosaccharide-producing type based its the end products: glucose, laminaribiose or laminaritetraose. The polypeptide is Glucan endo-1,3-beta-glucosidase BGN13.1 (bgn13.1) (Trichoderma harzianum (Hypocrea lixii)).